The following is a 460-amino-acid chain: GTPase Der (460 aa).

EngA-type G domains are found at residues 3 to 167 and 189 to 364; these read FTFA…PEPD and IRVA…AVWN. Residues 9-16, 56-60, 119-122, 195-202, 242-246, and 307-310 each bind GTP; these read GRPNVGKS, DTAGL, NKSE, GRPNAGKS, and NKWD. Residues 365-449 enclose the KH-like domain; it reads TRVPTAALNR…PVRIMLREKA (85 aa).

Belongs to the TRAFAC class TrmE-Era-EngA-EngB-Septin-like GTPase superfamily. EngA (Der) GTPase family. In terms of assembly, associates with the 50S ribosomal subunit.

Functionally, GTPase that plays an essential role in the late steps of ribosome biogenesis. The polypeptide is GTPase Der (Rhodopseudomonas palustris (strain BisB5)).